The sequence spans 56 residues: Large ribosomal subunit protein bL32 (56 aa).

Over residues 1-20 (MAVPKRRTSRSNTRSRRAQW) the composition is skewed to basic residues. The segment at 1 to 26 (MAVPKRRTSRSNTRSRRAQWKAKAPA) is disordered.

This sequence belongs to the bacterial ribosomal protein bL32 family.

In Parafrankia sp. (strain EAN1pec), this protein is Large ribosomal subunit protein bL32.